The following is a 487-amino-acid chain: Ribosomal protein uS12 methylthiotransferase RimO (487 aa).

Residues 38-149 (PTVAFAHLGC…IVEVLEQVEA (112 aa)) form the MTTase N-terminal domain. [4Fe-4S] cluster is bound by residues Cys47, Cys83, Cys112, Cys187, Cys191, and Cys194. The 230-residue stretch at 173 to 402 (TTSEAVAYLK…MEAQQAISAE (230 aa)) folds into the Radical SAM core domain. Positions 405 to 476 (GAWVGRIVDV…IYDLEGEVVG (72 aa)) constitute a TRAM domain.

Belongs to the methylthiotransferase family. RimO subfamily. It depends on [4Fe-4S] cluster as a cofactor.

The protein resides in the cytoplasm. The catalysed reaction is L-aspartate(89)-[ribosomal protein uS12]-hydrogen + (sulfur carrier)-SH + AH2 + 2 S-adenosyl-L-methionine = 3-methylsulfanyl-L-aspartate(89)-[ribosomal protein uS12]-hydrogen + (sulfur carrier)-H + 5'-deoxyadenosine + L-methionine + A + S-adenosyl-L-homocysteine + 2 H(+). Functionally, catalyzes the methylthiolation of an aspartic acid residue of ribosomal protein uS12. In Synechococcus sp. (strain RCC307), this protein is Ribosomal protein uS12 methylthiotransferase RimO.